A 328-amino-acid chain; its full sequence is Ferredoxin--NADP reductase (328 aa).

Residues glutamate 34, glutamine 42, tyrosine 47, valine 87, phenylalanine 120, aspartate 283, and threonine 323 each contribute to the FAD site.

This sequence belongs to the ferredoxin--NADP reductase type 2 family. Homodimer. It depends on FAD as a cofactor.

The enzyme catalyses 2 reduced [2Fe-2S]-[ferredoxin] + NADP(+) + H(+) = 2 oxidized [2Fe-2S]-[ferredoxin] + NADPH. The sequence is that of Ferredoxin--NADP reductase from Pediococcus pentosaceus (strain ATCC 25745 / CCUG 21536 / LMG 10740 / 183-1w).